The following is a 197-amino-acid chain: Holliday junction branch migration complex subunit RuvA (197 aa).

The tract at residues 1 to 63 (MYAYLKGIIT…EDAHLLYGFR (63 aa)) is domain I. The domain II stretch occupies residues 64–142 (SEDEKKLFLS…VAGDDLPAKV (79 aa)). Residues 143-147 (AVQAS) form a flexible linker region. Residues 148–197 (AENQELEEAMEAMLALGYKATELKKIKKFFEGTTDTAENYIKSALKMLVK) are domain III.

The protein belongs to the RuvA family. As to quaternary structure, homotetramer. Forms an RuvA(8)-RuvB(12)-Holliday junction (HJ) complex. HJ DNA is sandwiched between 2 RuvA tetramers; dsDNA enters through RuvA and exits via RuvB. An RuvB hexamer assembles on each DNA strand where it exits the tetramer. Each RuvB hexamer is contacted by two RuvA subunits (via domain III) on 2 adjacent RuvB subunits; this complex drives branch migration. In the full resolvosome a probable DNA-RuvA(4)-RuvB(12)-RuvC(2) complex forms which resolves the HJ.

The protein resides in the cytoplasm. The RuvA-RuvB-RuvC complex processes Holliday junction (HJ) DNA during genetic recombination and DNA repair, while the RuvA-RuvB complex plays an important role in the rescue of blocked DNA replication forks via replication fork reversal (RFR). RuvA specifically binds to HJ cruciform DNA, conferring on it an open structure. The RuvB hexamer acts as an ATP-dependent pump, pulling dsDNA into and through the RuvAB complex. HJ branch migration allows RuvC to scan DNA until it finds its consensus sequence, where it cleaves and resolves the cruciform DNA. The sequence is that of Holliday junction branch migration complex subunit RuvA from Streptococcus pneumoniae serotype 19F (strain G54).